The chain runs to 1250 residues: DNA excision repair protein ERCC-6-like (1250 aa).

Ser-14 bears the Phosphoserine mark. The stretch at 21-54 (YLRYVKEAKEATKNGDLEEAFKLFNLAKDIFPNE) is one TPR 1 repeat. The Helicase ATP-binding domain occupies 109-277 (SLYRDGRKGG…WSLFDFACQG (169 aa)). 122–129 (DDMGLGKT) provides a ligand contact to ATP. The DEAH box signature appears at 228-231 (DEAH). One can recognise a Helicase C-terminal domain in the interval 464–620 (FLMDLLKRLR…EKKNPFRYFS (157 aa)). Residues 735-768 (VFPSSTKKKCPKLNKPQPQPSPLLSTHHTQEEDI) form a disordered region. Phosphoserine occurs at positions 755, 774, 807, and 810. Thr-813 is modified (phosphothreonine). Ser-820 is modified (phosphoserine). A disordered region spans residues 926–946 (SALQDAQASEAKLEEEPSASS). Ser-969, Ser-971, Ser-995, Ser-1004, and Ser-1028 each carry phosphoserine. Residues 1061-1092 (ASTPKNDISPPGRFFSSQIPSSVNKSMNSRRS) form a disordered region. At Thr-1063 the chain carries Phosphothreonine; by PLK1. Phosphoserine is present on Ser-1069. Over residues 1075-1087 (FSSQIPSSVNKSM) the composition is skewed to polar residues. A phosphoserine mark is found at Ser-1098 and Ser-1118. Positions 1110–1199 (MEERLDDSSE…QDKAAEATND (90 aa)) are disordered. Residues 1115 to 1124 (DDSSEAKGPE) show a composition bias toward basic and acidic residues. Residues 1125 to 1135 (DYPEEGVEESS) show a composition bias toward acidic residues. A compositionally biased stretch (polar residues) spans 1149 to 1173 (ETLSSENKSSWLMTSKPSALAQETS). Residues Ser-1181 and Ser-1188 each carry the phosphoserine modification. Residues 1200–1233 (YETLVKRGKELKECGKIQEALNCLVKALDIKSAD) form a TPR 2 repeat.

Belongs to the SNF2/RAD54 helicase family. Interacts with PLK1, which phosphorylates it. Both proteins are mutually dependent on each other for correct subcellular localization. Interacts (via N-terminal TPR repeat) with BEND3 (via BEN domains 1 and 3); the interaction is direct. Phosphorylation by PLK1 prevents the association with chromosome arms and restricts its localization to the kinetochore-centromere region.

It is found in the chromosome. Its subcellular location is the centromere. The protein resides in the kinetochore. The catalysed reaction is ATP + H2O = ADP + phosphate + H(+). Functionally, DNA helicase that acts as a tension sensor that associates with catenated DNA which is stretched under tension until it is resolved during anaphase. Functions as ATP-dependent DNA translocase. Can promote Holliday junction branch migration (in vitro). In Homo sapiens (Human), this protein is DNA excision repair protein ERCC-6-like (ERCC6L).